Here is a 308-residue protein sequence, read N- to C-terminus: Putative S-adenosyl-L-methionine-dependent methyltransferase MAB_4584c (308 aa).

Residues aspartate 131 and 160–161 (DL) contribute to the S-adenosyl-L-methionine site.

This sequence belongs to the UPF0677 family.

In terms of biological role, exhibits S-adenosyl-L-methionine-dependent methyltransferase activity. The protein is Putative S-adenosyl-L-methionine-dependent methyltransferase MAB_4584c of Mycobacteroides abscessus (strain ATCC 19977 / DSM 44196 / CCUG 20993 / CIP 104536 / JCM 13569 / NCTC 13031 / TMC 1543 / L948) (Mycobacterium abscessus).